The sequence spans 163 residues: Large ribosomal subunit protein uL15 (163 aa).

Residues 27–37 are compositionally biased toward gly residues; the sequence is SGLGKTAGRGQ. The tract at residues 27 to 46 is disordered; that stretch reads SGLGKTAGRGQKGQKSRSGV.

The protein belongs to the universal ribosomal protein uL15 family. In terms of assembly, part of the 50S ribosomal subunit.

Functionally, binds to the 23S rRNA. The chain is Large ribosomal subunit protein uL15 from Zymomonas mobilis subsp. mobilis (strain ATCC 31821 / ZM4 / CP4).